The sequence spans 447 residues: Phosphoglucosamine mutase (447 aa).

S108 acts as the Phosphoserine intermediate in catalysis. The Mg(2+) site is built by S108, D247, D249, and D251. Phosphoserine is present on S108.

It belongs to the phosphohexose mutase family. Mg(2+) is required as a cofactor. Activated by phosphorylation.

It carries out the reaction alpha-D-glucosamine 1-phosphate = D-glucosamine 6-phosphate. In terms of biological role, catalyzes the conversion of glucosamine-6-phosphate to glucosamine-1-phosphate. The sequence is that of Phosphoglucosamine mutase from Bordetella petrii (strain ATCC BAA-461 / DSM 12804 / CCUG 43448).